The sequence spans 244 residues: Uridylate kinase (244 aa).

Residue 12–15 (KLSG) coordinates ATP. The tract at residues 20–25 (GERGVG) is involved in allosteric activation by GTP. G54 contributes to the UMP binding site. 2 residues coordinate ATP: G55 and R59. UMP contacts are provided by residues D74 and 135–142 (IGSPYFST). Positions 163, 169, and 172 each coordinate ATP.

It belongs to the UMP kinase family. As to quaternary structure, homohexamer.

It is found in the cytoplasm. The catalysed reaction is UMP + ATP = UDP + ADP. The protein operates within pyrimidine metabolism; CTP biosynthesis via de novo pathway; UDP from UMP (UMPK route): step 1/1. With respect to regulation, allosterically activated by GTP. Inhibited by UTP. In terms of biological role, catalyzes the reversible phosphorylation of UMP to UDP. The chain is Uridylate kinase from Streptococcus suis (strain 98HAH33).